We begin with the raw amino-acid sequence, 176 residues long: Ribosome maturation factor RimM (176 aa).

Positions 104-176 constitute a PRC barrel domain; it reads EDEYYFYEIL…KIIAKEMEWI (73 aa).

It belongs to the RimM family. Binds ribosomal protein uS19.

It localises to the cytoplasm. Its function is as follows. An accessory protein needed during the final step in the assembly of 30S ribosomal subunit, possibly for assembly of the head region. Essential for efficient processing of 16S rRNA. May be needed both before and after RbfA during the maturation of 16S rRNA. It has affinity for free ribosomal 30S subunits but not for 70S ribosomes. In Thermotoga maritima (strain ATCC 43589 / DSM 3109 / JCM 10099 / NBRC 100826 / MSB8), this protein is Ribosome maturation factor RimM.